The chain runs to 82 residues: Putative antitoxin VapB23 (82 aa).

Putative antitoxin component of a possible type II toxin-antitoxin (TA) system. The cognate toxin is VapC23. This Mycobacterium tuberculosis (strain ATCC 25618 / H37Rv) protein is Putative antitoxin VapB23 (vapB23).